Here is a 579-residue protein sequence, read N- to C-terminus: GPI alpha-1,2-mannosyltransferase 4 (579 aa).

The next 8 membrane-spanning stretches (helical) occupy residues 131–151 (LLLT…APPM), 156–173 (WNAL…VFYT), 180–200 (IEGL…TWGP), 216–236 (LGGI…FAVV), 258–278 (ALVL…TDSW), 369–389 (YLLL…HQEA), 391–411 (FLIP…QPVP), and 416–436 (VVLF…GGLV).

It belongs to the glycosyltransferase 22 family. PIGZ subfamily. Widely expressed at low level, with highest level in brain and colon.

Its subcellular location is the endoplasmic reticulum membrane. Its pathway is glycolipid biosynthesis; glycosylphosphatidylinositol-anchor biosynthesis. Functionally, alpha-1,2-mannosyltransferase that catalyzes the transfer of the fourth mannose, via an alpha-1,2 bond, from a dolichol-phosphate-mannose (Dol-P-Man) to an alpha-D-Man-(1-&gt;2)-alpha-D-Man-(1-&gt;6)-2-PEtn-alpha-D-Man-(1-&gt;4)-alpha-D-GlcN-(1-&gt;6)-(1-radyl,2-acyl-sn-glycero-3-phospho)-2-acyl-inositol (also termed H6) intermediate and participates in the twelfth step of the glycosylphosphatidylinositol-anchor biosynthesis. The presence of a fourth mannose in GPI is facultative, suggesting that it only exists in some tissues. This chain is GPI alpha-1,2-mannosyltransferase 4, found in Homo sapiens (Human).